We begin with the raw amino-acid sequence, 313 residues long: Protein TIFY 4A (313 aa).

The tract at residues Ser-118–Glu-149 is disordered. Residues Thr-150–Asn-185 enclose the Tify domain. Disordered regions lie at residues Lys-220 to Lys-256 and Gln-281 to Ile-313. Residues Gln-232 to Ala-254 carry the Jas motif. The Nuclear localization signal signature appears at Asn-234–Arg-241. Basic residues predominate over residues Arg-243–Lys-256.

It belongs to the TIFY/JAZ family. Interacts with AFPH2/NINJA.

It is found in the nucleus. Its function is as follows. Regulates the arrest of dispersed meristematic cells during lamina development. In Arabidopsis thaliana (Mouse-ear cress), this protein is Protein TIFY 4A (TIFY4A).